We begin with the raw amino-acid sequence, 103 residues long: Small ribosomal subunit protein uS10 (103 aa).

It belongs to the universal ribosomal protein uS10 family. In terms of assembly, part of the 30S ribosomal subunit.

In terms of biological role, involved in the binding of tRNA to the ribosomes. This Shewanella halifaxensis (strain HAW-EB4) protein is Small ribosomal subunit protein uS10.